The chain runs to 423 residues: NDP-N-acetyl-D-galactosaminuronic acid dehydrogenase (423 aa).

11-28 (TISVVGLGYIGLPTATVL) contacts NAD(+). Catalysis depends on Lys-218, which acts as the Proton donor/acceptor. Residue Cys-272 is the Nucleophile of the active site.

The protein belongs to the UDP-glucose/GDP-mannose dehydrogenase family.

Its function is as follows. Probably involved in the synthesis of sugar components of EPS I, by converting NDP-N-acetyl-D-galactosamine into NDP-N-acetyl-D-galactosaminuronic acid. In Ralstonia nicotianae (strain ATCC BAA-1114 / GMI1000) (Ralstonia solanacearum), this protein is NDP-N-acetyl-D-galactosaminuronic acid dehydrogenase (epsD).